We begin with the raw amino-acid sequence, 55 residues long: Spermatid nuclear transition protein 1 (55 aa).

Over residues 1–42 (MSTSRKLKTHGMRRGKNRAPHKGVKRGGSKRKYRKSVLKSRK) the composition is skewed to basic residues. Positions 1–55 (MSTSRKLKTHGMRRGKNRAPHKGVKRGGSKRKYRKSVLKSRKRGDDASRNYRSHL) are disordered. 2 positions are modified to phosphoserine: Ser-36 and Ser-40.

It belongs to the nuclear transition protein 1 family. As to expression, testis-specific.

The protein localises to the nucleus. The protein resides in the chromosome. Functionally, plays a key role in the replacement of histones to protamine in the elongating spermatids of mammals. In condensing spermatids, loaded onto the nucleosomes, where it promotes the recruitment and processing of protamines, which are responsible for histone eviction. The histone H2AB1-H2BC1/TH2B dimer is required for loading of TNP1 onto chromatin. The chain is Spermatid nuclear transition protein 1 from Mus musculus (Mouse).